The following is a 194-amino-acid chain: Small ribosomal subunit protein uS4c (194 aa).

In terms of domain architecture, S4 RNA-binding spans 82–143 (MRLDNILFRL…KERSKVLIQN (62 aa)).

This sequence belongs to the universal ribosomal protein uS4 family. Part of the 30S ribosomal subunit. Contacts protein S5. The interaction surface between S4 and S5 is involved in control of translational fidelity.

It is found in the plastid. The protein localises to the chloroplast. In terms of biological role, one of the primary rRNA binding proteins, it binds directly to 16S rRNA where it nucleates assembly of the body of the 30S subunit. Functionally, with S5 and S12 plays an important role in translational accuracy. The sequence is that of Small ribosomal subunit protein uS4c (rps4) from Trimezia steyermarkii (Steyermark's trimezia).